Consider the following 123-residue polypeptide: Probable ketoamine kinase in tonB 3'region (123 aa).

The active-site Proton acceptor is the Asp26.

This sequence belongs to the fructosamine kinase family.

Its function is as follows. Ketoamine kinase that phosphorylates ketoamines on the third carbon of the sugar moiety to generate ketoamine 3-phosphate. This Klebsiella pneumoniae protein is Probable ketoamine kinase in tonB 3'region.